A 148-amino-acid polypeptide reads, in one-letter code: WAP four-disulfide core domain protein 12 (148 aa).

A signal peptide spans 1 to 23 (MRSYSFWFLTAFLVFATLALGEA). Residues 27 to 74 (GKEKWGNCPAEKGSCIKSGPSQCHADNDCPGDKKCCFLSCSFKCVSPD) form the WAP domain. 4 disulfide bridges follow: cysteine 34/cysteine 62, cysteine 41/cysteine 66, cysteine 49/cysteine 61, and cysteine 55/cysteine 70. The segment at 74–148 (DRIRKEGGNE…QEASPQKEWS (75 aa)) is disordered.

It is found in the secreted. In terms of biological role, antibacterial protein. Putative acid-stable proteinase inhibitor. This chain is WAP four-disulfide core domain protein 12 (WFDC12), found in Lemur catta (Ring-tailed lemur).